The chain runs to 239 residues: Ribose-5-phosphate isomerase A (239 aa).

Residues 40–43 (SGST), 96–99 (DGAD), and 110–113 (KGGG) each bind substrate. The Proton acceptor role is filled by Glu-119. Lys-137 is a binding site for substrate.

This sequence belongs to the ribose 5-phosphate isomerase family. Homodimer.

It carries out the reaction aldehydo-D-ribose 5-phosphate = D-ribulose 5-phosphate. It functions in the pathway carbohydrate degradation; pentose phosphate pathway; D-ribose 5-phosphate from D-ribulose 5-phosphate (non-oxidative stage): step 1/1. In terms of biological role, catalyzes the reversible conversion of ribose-5-phosphate to ribulose 5-phosphate. This is Ribose-5-phosphate isomerase A from Methanococcus vannielii (strain ATCC 35089 / DSM 1224 / JCM 13029 / OCM 148 / SB).